Here is a 349-residue protein sequence, read N- to C-terminus: Divinyl chlorophyll a/b light-harvesting protein PcbA (349 aa).

6 helical membrane passes run 27-47 (FIAA…AFTL), 57-77 (VPMG…GIGF), 89-109 (VVAV…GGLM), 202-222 (VMGG…FHIA), 242-262 (AILS…AFWS), and 304-324 (LANV…WHAL).

It belongs to the PsbB/PsbC family. IsiA/Pcb subfamily. The antenna complex consists of divinyl chlorophylls (a and b) and divinyl chlorophyll a/b binding proteins and binds more divinyl chlorophyll b than does the antenna complex from high-light-adapted Prochlorococcus. Requires divinyl chlorophyll a as cofactor. Divinyl chlorophyll b serves as cofactor.

The protein localises to the cellular thylakoid membrane. The antenna complex functions as a light receptor, it captures and delivers excitation energy to photosystems II and I. The Prochlorales pcb genes are not related to higher plant LHCs. This chain is Divinyl chlorophyll a/b light-harvesting protein PcbA (pcbA), found in Prochlorococcus marinus (strain NATL2A).